The chain runs to 128 residues: Con-Ins F1 (128 aa).

Positions 1-24 are cleaved as a signal peptide; the sequence is MTTSSYFLLVTLGLLLYVCRSSFG. Disulfide bonds link Cys-29–Cys-104, Cys-41–Cys-107, Cys-53–Cys-120, and Cys-106–Cys-111. A propeptide spans 59–89 (c peptide); sequence LQGGTGKKRGRASPLRKRRAFLSMLKARAKR. Glu-115 bears the 4-carboxyglutamate; partial mark. Ser-127 bears the Serine amide mark.

This sequence belongs to the insulin family. In terms of assembly, heterodimer of A and B chains; disulfide-linked. As to expression, expressed by the venom gland.

The protein resides in the secreted. In terms of biological role, this venom insulin facilitates prey capture by rapidly inducing hypoglycemic shock. Intraperitoneal injection of this peptide into zebrafish lowers blood glucose with the same potency than human insulin. In vivo, when applied to water, this peptide reduces overall locomotor activity of zebrafish larvae, observed as a significant decrease in the percentage of time spent swimming and movement frequency. The protein is Con-Ins F1 of Conus floridulus (Cone snail).